A 140-amino-acid polypeptide reads, in one-letter code: Lymphocyte antigen 6H (140 aa).

Positions 1 to 25 (MLPAAMKGLGLVLLAALLCSSPAHG) are cleaved as a signal peptide. The 66-residue stretch at 26-91 (LWCQDCTLTT…RHFFSDYLMG (66 aa)) folds into the UPAR/Ly6 domain. 5 disulfides stabilise this stretch: cysteine 28–cysteine 52, cysteine 31–cysteine 40, cysteine 45–cysteine 73, cysteine 77–cysteine 104, and cysteine 105–cysteine 110. An N-linked (GlcNAc...) asparagine glycan is attached at asparagine 36.

Its subcellular location is the cell membrane. The protein is Lymphocyte antigen 6H (LY6H) of Bos taurus (Bovine).